The primary structure comprises 259 residues: 3-deoxy-manno-octulosonate cytidylyltransferase (259 aa).

Belongs to the KdsB family.

It is found in the cytoplasm. It carries out the reaction 3-deoxy-alpha-D-manno-oct-2-ulosonate + CTP = CMP-3-deoxy-beta-D-manno-octulosonate + diphosphate. It participates in nucleotide-sugar biosynthesis; CMP-3-deoxy-D-manno-octulosonate biosynthesis; CMP-3-deoxy-D-manno-octulosonate from 3-deoxy-D-manno-octulosonate and CTP: step 1/1. Its pathway is bacterial outer membrane biogenesis; lipopolysaccharide biosynthesis. In terms of biological role, activates KDO (a required 8-carbon sugar) for incorporation into bacterial lipopolysaccharide in Gram-negative bacteria. In Maricaulis maris (strain MCS10) (Caulobacter maris), this protein is 3-deoxy-manno-octulosonate cytidylyltransferase.